A 553-amino-acid chain; its full sequence is Putative transport protein YidE (553 aa).

A run of 5 helical transmembrane segments spans residues 4-24, 28-48, 65-85, 95-115, and 158-178; these read IALT…IGNV, GVGL…HFVS, FGLI…FFAS, LFAV…HKLF, and MSYA…MWML. RCK C-terminal domains lie at 191 to 276 and 279 to 361; these read QQHE…VIGQ and DTSL…VLGN. A run of 6 helical transmembrane segments spans residues 371 to 391, 393 to 413, 439 to 459, 464 to 484, 493 to 513, and 533 to 553; these read MLPV…PVFV, GFPA…ALIL, IVLF…HTLV, LSWI…VGIL, YLTM…LAFA, and LVMF…WSIG.

The protein belongs to the AAE transporter (TC 2.A.81) family. YidE subfamily.

The protein resides in the cell membrane. This is Putative transport protein YidE from Escherichia coli O6:H1 (strain CFT073 / ATCC 700928 / UPEC).